The chain runs to 70 residues: Enhancer of split m6 protein (70 aa).

The chain is Enhancer of split m6 protein from Drosophila melanogaster (Fruit fly).